The primary structure comprises 293 residues: Fructose-bisphosphate aldolase (293 aa).

D-glyceraldehyde 3-phosphate is bound at residue S50. Catalysis depends on D85, which acts as the Proton donor. Residues H86, D106, E136, and H178 each coordinate Zn(2+). G179 is a binding site for dihydroxyacetone phosphate. Residue H208 coordinates Zn(2+). Residues 209–211 (GGS) and 230–233 (NVNT) each bind dihydroxyacetone phosphate.

This sequence belongs to the class II fructose-bisphosphate aldolase family. The cofactor is Zn(2+).

The catalysed reaction is beta-D-fructose 1,6-bisphosphate = D-glyceraldehyde 3-phosphate + dihydroxyacetone phosphate. It functions in the pathway carbohydrate degradation; glycolysis; D-glyceraldehyde 3-phosphate and glycerone phosphate from D-glucose: step 4/4. Functionally, catalyzes the aldol condensation of dihydroxyacetone phosphate (DHAP or glycerone-phosphate) with glyceraldehyde 3-phosphate (G3P) to form fructose 1,6-bisphosphate (FBP) in gluconeogenesis and the reverse reaction in glycolysis. In Streptococcus pyogenes serotype M3 (strain ATCC BAA-595 / MGAS315), this protein is Fructose-bisphosphate aldolase (fba).